A 277-amino-acid polypeptide reads, in one-letter code: Putative pyruvate, phosphate dikinase regulatory protein (277 aa).

Residue 151-158 (GISRTSKT) participates in ADP binding.

Belongs to the pyruvate, phosphate/water dikinase regulatory protein family. PDRP subfamily.

The enzyme catalyses N(tele)-phospho-L-histidyl/L-threonyl-[pyruvate, phosphate dikinase] + ADP = N(tele)-phospho-L-histidyl/O-phospho-L-threonyl-[pyruvate, phosphate dikinase] + AMP + H(+). It catalyses the reaction N(tele)-phospho-L-histidyl/O-phospho-L-threonyl-[pyruvate, phosphate dikinase] + phosphate + H(+) = N(tele)-phospho-L-histidyl/L-threonyl-[pyruvate, phosphate dikinase] + diphosphate. Bifunctional serine/threonine kinase and phosphorylase involved in the regulation of the pyruvate, phosphate dikinase (PPDK) by catalyzing its phosphorylation/dephosphorylation. The chain is Putative pyruvate, phosphate dikinase regulatory protein from Alkaliphilus metalliredigens (strain QYMF).